The primary structure comprises 636 residues: Epsin-3 (636 aa).

Positions 8, 11, 25, 30, 63, and 73 each coordinate a 1,2-diacyl-sn-glycero-3-phospho-(1D-myo-inositol-4,5-bisphosphate). The ENTH domain maps to 12 to 144 (NIVHNYSEAE…KDEERLRQER (133 aa)). The segment at 153–503 (RMALEGMGIG…TPESFLGPSA (351 aa)) is disordered. The segment covering 174–189 (GSPSSYTSASSSPRYA) has biased composition (low complexity). Phosphoserine occurs at positions 184 and 185. UIM domains are found at residues 202 to 221 (EEEL…AERP) and 229 to 248 (DEDL…HEKG). Basic and acidic residues-rich tracts occupy residues 214–231 (SREE…RDED) and 242–256 (RQEH…KGDD). Position 257 is a phosphoserine (S257). Residues 270-288 (RQRDREPEREERKEEEKLK) are compositionally biased toward basic and acidic residues. Repeat copies occupy residues 315 to 317 (DPW), 338 to 340 (DPW), 365 to 367 (EPW), 381 to 383 (DPW), and 398 to 400 (DPW). The 5 X 3 AA repeats of [DE]-P-W stretch occupies residues 315–400 (DPWDIPGLRP…KLPSTGADPW (86 aa)). Residues 426 to 435 (ESTEPKESRD) are compositionally biased toward basic and acidic residues. A run of 2 repeats spans residues 523–525 (NPF) and 536–538 (NPF). The segment at 523-635 (NPFLTGLGVP…LPPQAGTNPF (113 aa)) is 3 X 3 AA repeats of N-P-F. A compositionally biased stretch (pro residues) spans 607–616 (PPPASLPQPL). Positions 607-636 (PPPASLPQPLLPTSGPMGPLPPQAGTNPFL) are disordered. Copy 3 of the repeat occupies 633 to 635 (NPF).

This sequence belongs to the epsin family.

The protein resides in the cytoplasm. It localises to the cell cortex. Its subcellular location is the perinuclear region. It is found in the cytoplasmic vesicle. The protein localises to the clathrin-coated vesicle. In Mus musculus (Mouse), this protein is Epsin-3 (Epn3).